The chain runs to 405 residues: Glucose-1-phosphate adenylyltransferase 1 (405 aa).

Residues tyrosine 96, glycine 161, 176–177, and serine 194 contribute to the alpha-D-glucose 1-phosphate site; that span reads EK.

It belongs to the bacterial/plant glucose-1-phosphate adenylyltransferase family. In terms of assembly, homotetramer.

It carries out the reaction alpha-D-glucose 1-phosphate + ATP + H(+) = ADP-alpha-D-glucose + diphosphate. It participates in glycan biosynthesis; glycogen biosynthesis. Functionally, involved in the biosynthesis of ADP-glucose, a building block required for the elongation reactions to produce glycogen. Catalyzes the reaction between ATP and alpha-D-glucose 1-phosphate (G1P) to produce pyrophosphate and ADP-Glc. The sequence is that of Glucose-1-phosphate adenylyltransferase 1 from Vibrio cholerae serotype O1 (strain ATCC 39315 / El Tor Inaba N16961).